The primary structure comprises 89 residues: Small ribosomal subunit protein uS15 (89 aa).

This sequence belongs to the universal ribosomal protein uS15 family. As to quaternary structure, part of the 30S ribosomal subunit. Forms a bridge to the 50S subunit in the 70S ribosome, contacting the 23S rRNA.

In terms of biological role, one of the primary rRNA binding proteins, it binds directly to 16S rRNA where it helps nucleate assembly of the platform of the 30S subunit by binding and bridging several RNA helices of the 16S rRNA. Forms an intersubunit bridge (bridge B4) with the 23S rRNA of the 50S subunit in the ribosome. The sequence is that of Small ribosomal subunit protein uS15 from Oceanobacillus iheyensis (strain DSM 14371 / CIP 107618 / JCM 11309 / KCTC 3954 / HTE831).